A 433-amino-acid chain; its full sequence is MGEEYEVEIGPVAHGGHCIARTSEGQVLFVRHALPGERVLARVTEGEEGARYLRADAVEILDASKDRVEAPCPYAGPGRCGGCDWQHAKPGAQRRLKGEVIAEQLQRLAGLTPEEAGWDGTVMPAEGDKLPAGEVPAWRTRVQYAVDADGNAGLRRHRSHEVEPIEHCMIAAPGVSELGIEERDWSGMESVDAIAATGSQDRMVILEPRPGARLPLVELDKPVSVMRVEEKDGGIHRVHGRAFVRERADGRTYRVGSGGFWQVHPMAADTLVKAVMQGLLPRKGDMALDLYCGVGLFAGALADRLGDKGAVLGIESGKRAVEDARHNLAAFERVRIEQGKVEAVLPRTGITEVDLIVLDPPRAGAGKKTVEQLVSLGARKIAYVACDPAALARDLGYFRDGGYKVRTLRAFDLFPMTHHVECVAILEPAAKGL.

A TRAM domain is found at 1 to 59 (MGEEYEVEIGPVAHGGHCIARTSEGQVLFVRHALPGERVLARVTEGEEGARYLRADAVE). The [4Fe-4S] cluster site is built by Cys72, Cys80, Cys83, and Cys168. Positions 262, 291, 315, and 359 each coordinate S-adenosyl-L-methionine. Catalysis depends on Cys386, which acts as the Nucleophile.

Belongs to the class I-like SAM-binding methyltransferase superfamily. RNA M5U methyltransferase family.

This is an uncharacterized protein from Streptomyces avermitilis (strain ATCC 31267 / DSM 46492 / JCM 5070 / NBRC 14893 / NCIMB 12804 / NRRL 8165 / MA-4680).